The sequence spans 361 residues: RNA 3'-terminal phosphate cyclase (361 aa).

ATP-binding positions include Q109 and 293-297 (HLADQ). Catalysis depends on H319, which acts as the Tele-AMP-histidine intermediate.

This sequence belongs to the RNA 3'-terminal cyclase family. Type 1 subfamily.

The protein localises to the cytoplasm. It carries out the reaction a 3'-end 3'-phospho-ribonucleotide-RNA + ATP = a 3'-end 2',3'-cyclophospho-ribonucleotide-RNA + AMP + diphosphate. In terms of biological role, catalyzes the conversion of 3'-phosphate to a 2',3'-cyclic phosphodiester at the end of RNA. The mechanism of action of the enzyme occurs in 3 steps: (A) adenylation of the enzyme by ATP; (B) transfer of adenylate to an RNA-N3'P to produce RNA-N3'PP5'A; (C) and attack of the adjacent 2'-hydroxyl on the 3'-phosphorus in the diester linkage to produce the cyclic end product. The biological role of this enzyme is unknown but it is likely to function in some aspects of cellular RNA processing. The sequence is that of RNA 3'-terminal phosphate cyclase from Methylococcus capsulatus (strain ATCC 33009 / NCIMB 11132 / Bath).